Here is a 458-residue protein sequence, read N- to C-terminus: tRNA modification GTPase MnmE (458 aa).

Residues R32, E89, and K128 each contribute to the (6S)-5-formyl-5,6,7,8-tetrahydrofolate site. The region spanning 224–381 is the TrmE-type G domain; sequence GVRVVLAGRP…LCQRLKECAG (158 aa). N234 is a K(+) binding site. GTP-binding positions include 234 to 239, 253 to 259, and 278 to 281; these read NVGKSS, TDVPGTT, and DTAG. S238 provides a ligand contact to Mg(2+). Residues T253, V255, and T258 each contribute to the K(+) site. Mg(2+) is bound at residue T259. A (6S)-5-formyl-5,6,7,8-tetrahydrofolate-binding site is contributed by K458.

The protein belongs to the TRAFAC class TrmE-Era-EngA-EngB-Septin-like GTPase superfamily. TrmE GTPase family. Homodimer. Heterotetramer of two MnmE and two MnmG subunits. K(+) is required as a cofactor.

It is found in the cytoplasm. Exhibits a very high intrinsic GTPase hydrolysis rate. Involved in the addition of a carboxymethylaminomethyl (cmnm) group at the wobble position (U34) of certain tRNAs, forming tRNA-cmnm(5)s(2)U34. The chain is tRNA modification GTPase MnmE from Nitrosococcus oceani (strain ATCC 19707 / BCRC 17464 / JCM 30415 / NCIMB 11848 / C-107).